The primary structure comprises 158 residues: MSSAIERKSLDPSEEPVDEVLQIPPSLLTCGGCQQNIGDRYFLKAIDQYWHEDCLSCDLCGCRLGEVGRRLYYKLGRKLCRRDYLRLFGQDGLCASCDKRIRAYEMTMRVKDKVYHLECFKCAACQKHFCVGDRYLLINSDIVCEQDIYEWTKINGII.

LIM zinc-binding domains are found at residues 30–89 (CGGC…RLFG) and 94–153 (CASC…EWTK).

In terms of assembly, interacts with BEX2 and KDM5A. Interacts via its LIM domains with ELF2 and LDB1. Also interacts with basic helix-loop-helix protein TAL1/SCL and can assemble in a complex with LMO2 and TAL1/SCL. Expressed in early mouse development in central nervous system, lung, kidney, liver and spleen but only very low levels occur in thymus.

It localises to the nucleus. In terms of biological role, acts with TAL1/SCL to regulate red blood cell development. Also acts with LDB1 to maintain erythroid precursors in an immature state. This Mus musculus (Mouse) protein is Rhombotin-2 (Lmo2).